Reading from the N-terminus, the 275-residue chain is Ribosomal RNA small subunit methyltransferase A (275 aa).

N19, L21, G46, E71, D94, and N117 together coordinate S-adenosyl-L-methionine.

The protein belongs to the class I-like SAM-binding methyltransferase superfamily. rRNA adenine N(6)-methyltransferase family. RsmA subfamily.

The protein resides in the cytoplasm. The enzyme catalyses adenosine(1518)/adenosine(1519) in 16S rRNA + 4 S-adenosyl-L-methionine = N(6)-dimethyladenosine(1518)/N(6)-dimethyladenosine(1519) in 16S rRNA + 4 S-adenosyl-L-homocysteine + 4 H(+). Functionally, specifically dimethylates two adjacent adenosines (A1518 and A1519) in the loop of a conserved hairpin near the 3'-end of 16S rRNA in the 30S particle. May play a critical role in biogenesis of 30S subunits. In Burkholderia mallei (strain NCTC 10247), this protein is Ribosomal RNA small subunit methyltransferase A.